Consider the following 156-residue polypeptide: Small ribosomal subunit protein uS7 (156 aa).

The protein belongs to the universal ribosomal protein uS7 family. Part of the 30S ribosomal subunit. Contacts proteins S9 and S11.

In terms of biological role, one of the primary rRNA binding proteins, it binds directly to 16S rRNA where it nucleates assembly of the head domain of the 30S subunit. Is located at the subunit interface close to the decoding center, probably blocks exit of the E-site tRNA. The polypeptide is Small ribosomal subunit protein uS7 (Mycolicibacterium gilvum (strain PYR-GCK) (Mycobacterium gilvum (strain PYR-GCK))).